The primary structure comprises 394 residues: Elongation factor Tu (394 aa).

A tr-type G domain is found at 10–204 (KPHVNVGTIG…ALDNYIPEPE (195 aa)). The tract at residues 19-26 (GHVDHGKT) is G1. 19–26 (GHVDHGKT) contacts GTP. Mg(2+) is bound at residue Thr26. Positions 60-64 (GITIS) are G2. The interval 81-84 (DCPG) is G3. Residues 81 to 85 (DCPGH) and 136 to 139 (NKCD) contribute to the GTP site. Residues 136–139 (NKCD) are G4. Positions 174 to 176 (SAL) are G5.

This sequence belongs to the TRAFAC class translation factor GTPase superfamily. Classic translation factor GTPase family. EF-Tu/EF-1A subfamily. Monomer.

It is found in the cytoplasm. It catalyses the reaction GTP + H2O = GDP + phosphate + H(+). GTP hydrolase that promotes the GTP-dependent binding of aminoacyl-tRNA to the A-site of ribosomes during protein biosynthesis. The protein is Elongation factor Tu of Idiomarina loihiensis (strain ATCC BAA-735 / DSM 15497 / L2-TR).